Consider the following 235-residue polypeptide: Elongation factor Tu (235 aa).

The 125-residue stretch at 1–125 (KNMITGATQM…DGDKYIPTPS (125 aa)) folds into the tr-type G domain. Residue 47-50 (NKQD) coordinates GTP.

The protein belongs to the TRAFAC class translation factor GTPase superfamily. Classic translation factor GTPase family. EF-Tu/EF-1A subfamily. In terms of assembly, monomer.

The protein localises to the cytoplasm. The catalysed reaction is GTP + H2O = GDP + phosphate + H(+). Its function is as follows. GTP hydrolase that promotes the GTP-dependent binding of aminoacyl-tRNA to the A-site of ribosomes during protein biosynthesis. The chain is Elongation factor Tu (tufA) from Leptolyngbya boryana (Plectonema boryanum).